A 109-amino-acid polypeptide reads, in one-letter code: Mannose-specific lectin (109 aa).

Residues 25–109 form the Bulb-type lectin domain; that stretch reads MQEDCNLVLY…ARWATGTNIH (85 aa). Positions 26, 28, 30, 34, 37, 38, 41, 42, 44, 57, 59, 61, 65, 72, 73, 76, 83, 89, 91, 93, 97, and 102 each coordinate alpha-D-mannopyranose. Cys29 and Cys52 are joined by a disulfide.

In terms of assembly, homotetramer; antiparallel. Detected in bulbs (at protein level).

It is found in the secreted. Its activity is regulated as follows. Strongly inhibited by alpha-1,6-linked mannotriose. Inhibited by various oligosaccharides of P.pastoris mannan including, Man(alpha-l,6)Man-alpha-O-Me, Man(alpha-l,2)Man, Man(alpha-l,3)Man-alpha-O-Me, Man(alpha-l,2)Man, alpha-1,2-linked mannotriose, and Man(alpha-1,6)Glc, in order of decreasing potency. Weakly inhibited by elsinotetraose. Not inhibited by maltose or nigerose. Its function is as follows. D-mannose-binding lectin which binds alpha-D-linked mannose. Displays a high affinity for alpha-(1-6)-mannose oligomers. Able to interact with both terminal and internal alpha-D-mannosyl residues. Displays antiviral activity and therefore may contribute to defense against infections. The polypeptide is Mannose-specific lectin (Narcissus pseudonarcissus (Daffodil)).